The following is a 411-amino-acid chain: Serine hydroxymethyltransferase (411 aa).

120–122 (GHL) is a binding site for (6S)-5,6,7,8-tetrahydrofolate. N6-(pyridoxal phosphate)lysine is present on lysine 225. 350–352 (SPF) provides a ligand contact to (6S)-5,6,7,8-tetrahydrofolate.

Belongs to the SHMT family. Homodimer. Requires pyridoxal 5'-phosphate as cofactor.

The protein resides in the cytoplasm. It carries out the reaction (6R)-5,10-methylene-5,6,7,8-tetrahydrofolate + glycine + H2O = (6S)-5,6,7,8-tetrahydrofolate + L-serine. Its pathway is one-carbon metabolism; tetrahydrofolate interconversion. It participates in amino-acid biosynthesis; glycine biosynthesis; glycine from L-serine: step 1/1. Functionally, catalyzes the reversible interconversion of serine and glycine with tetrahydrofolate (THF) serving as the one-carbon carrier. This reaction serves as the major source of one-carbon groups required for the biosynthesis of purines, thymidylate, methionine, and other important biomolecules. Also exhibits THF-independent aldolase activity toward beta-hydroxyamino acids, producing glycine and aldehydes, via a retro-aldol mechanism. This chain is Serine hydroxymethyltransferase, found in Limosilactobacillus reuteri (strain DSM 20016) (Lactobacillus reuteri).